Reading from the N-terminus, the 453-residue chain is Ribosomal protein uS12 methylthiotransferase RimO (453 aa).

The 111-residue stretch at Pro6 to Ala116 folds into the MTTase N-terminal domain. Cys15, Cys51, Cys80, Cys148, Cys152, and Cys155 together coordinate [4Fe-4S] cluster. The region spanning Leu134 to Asn371 is the Radical SAM core domain. The region spanning Gln374–Gly440 is the TRAM domain.

The protein belongs to the methylthiotransferase family. RimO subfamily. [4Fe-4S] cluster serves as cofactor.

It localises to the cytoplasm. The catalysed reaction is L-aspartate(89)-[ribosomal protein uS12]-hydrogen + (sulfur carrier)-SH + AH2 + 2 S-adenosyl-L-methionine = 3-methylsulfanyl-L-aspartate(89)-[ribosomal protein uS12]-hydrogen + (sulfur carrier)-H + 5'-deoxyadenosine + L-methionine + A + S-adenosyl-L-homocysteine + 2 H(+). Its function is as follows. Catalyzes the methylthiolation of an aspartic acid residue of ribosomal protein uS12. This is Ribosomal protein uS12 methylthiotransferase RimO from Hydrogenovibrio crunogenus (strain DSM 25203 / XCL-2) (Thiomicrospira crunogena).